Here is a 404-residue protein sequence, read N- to C-terminus: Proteasomal ubiquitin receptor ADRM1-B (404 aa).

A Pru domain is found at 17–130 (SSSKYLVEFR…RKVNEYLNNP (114 aa)). 3 disordered regions span residues 128–149 (NNPPMPGALGGSGSGSHELSAL), 195–258 (GSGG…TSPT), and 376–404 (FAKAMQSTSSQKERESSEKKEEEEDMSLD). Residues 195–247 (GSGGPTTSSSSSSSRSQSAAVTPSSTTSSTRTTSAPVAPAAAPATTPSPAVSS) show a composition bias toward low complexity. A compositionally biased stretch (polar residues) spans 248-258 (NDGASAATSPT). A DEUBAD domain is found at 278-390 (TGEGGQQVDL…QSTSSQKERE (113 aa)). Over residues 386–395 (QKERESSEKK) the composition is skewed to basic and acidic residues.

It belongs to the ADRM1 family. As to quaternary structure, component of the 19S proteasome regulatory particle complex. The 26S proteasome consists of a 20S core particle (CP) and two 19S regulatory subunits (RP).

It is found in the cytoplasm. The protein resides in the nucleus. Functionally, component of the 26S proteasome, a multiprotein complex involved in the ATP-dependent degradation of ubiquitinated proteins. This complex plays a key role in the maintenance of protein homeostasis by removing misfolded or damaged proteins, which could impair cellular functions, and by removing proteins whose functions are no longer required. Therefore, the proteasome participates in numerous cellular processes, including cell cycle progression, apoptosis, or DNA damage repair. Within the complex, functions as a proteasomal ubiquitin receptor. The chain is Proteasomal ubiquitin receptor ADRM1-B (adrm1-b) from Xenopus laevis (African clawed frog).